A 454-amino-acid chain; its full sequence is tRNA modification GTPase MnmE (454 aa).

Residues Arg23, Glu80, and Lys120 each coordinate (6S)-5-formyl-5,6,7,8-tetrahydrofolate. A TrmE-type G domain is found at 216 to 377; that stretch reads GMRVVIAGRP…VREHLKACIG (162 aa). Asn226 is a binding site for K(+). GTP contacts are provided by residues 226–231, 245–251, 270–273, and 335–338; these read NAGKSS, TEIAGTT, DTAG, and NKAD. Residue Ser230 participates in Mg(2+) binding. Residues Thr245, Ile247, and Thr250 each coordinate K(+). A Mg(2+)-binding site is contributed by Thr251. Residue Lys454 participates in (6S)-5-formyl-5,6,7,8-tetrahydrofolate binding.

This sequence belongs to the TRAFAC class TrmE-Era-EngA-EngB-Septin-like GTPase superfamily. TrmE GTPase family. In terms of assembly, homodimer. Heterotetramer of two MnmE and two MnmG subunits. K(+) serves as cofactor.

The protein resides in the cytoplasm. Functionally, exhibits a very high intrinsic GTPase hydrolysis rate. Involved in the addition of a carboxymethylaminomethyl (cmnm) group at the wobble position (U34) of certain tRNAs, forming tRNA-cmnm(5)s(2)U34. This chain is tRNA modification GTPase MnmE, found in Pseudoalteromonas translucida (strain TAC 125).